The primary structure comprises 270 residues: uncharacterized protein (270 aa).

Topologically, residues 1–37 (MATHTSKRRIHRWENNELSEENSTIIYFPARGLMWTH) are cytoplasmic. Residues 38 to 58 (FPFVLGICLEFVGYVLKIVFI) traverse the membrane as a helical segment. At 59-65 (NSPSIST) the chain is on the extracellular side. Residues 66 to 86 (FIAQSVLLLIAPSLYALSIFM) traverse the membrane as a helical segment. Over 87-93 (LFSKMAR) the chain is Cytoplasmic. Residues 94-114 (LILMEAYMLIPAKFSTVSFVV) form a helical membrane-spanning segment. Over 115–140 (ADMIGRVLQAVGGGLLSSWNSRNTGR) the chain is Extracellular. A helical membrane pass occupies residues 141-161 (ILIIVGLFIQIFCYTFLTFSQ). The Cytoplasmic portion of the chain corresponds to 162–181 (LFLHYKMKATPSKIVRDSNE). The chain crosses the membrane as a helical span at residues 182–202 (WFQYNFILLAGILLVNGRTIV). The Extracellular portion of the chain corresponds to 203–220 (RVVQFLMGLQSYIGQHEW). A helical transmembrane segment spans residues 221-241 (CLYVFDTVLMFLLPLIFLATF). Over 242 to 270 (RARNLFKLQDKSVNIQLNKLLDKESVSED) the chain is Cytoplasmic.

Belongs to the lipid-translocating exporter (LTE) (TC 9.A.26.1) family.

The protein localises to the membrane. This is an uncharacterized protein from Saccharomyces cerevisiae (strain ATCC 204508 / S288c) (Baker's yeast).